The sequence spans 408 residues: Secreted mono- and diacylglycerol lipase 2 (408 aa).

An N-terminal signal peptide occupies residues 1–24 (MRFKLADSLSLITVQLILATSTLA). Asn177 carries N-linked (GlcNAc...) asparagine glycosylation. Catalysis depends on Ser217, which acts as the Nucleophile. Residues Asp283 and His374 contribute to the active site.

Belongs to the AB hydrolase superfamily. Lipase family. Class 3 subfamily.

The protein resides in the secreted. It catalyses the reaction a monoacylglycerol + H2O = glycerol + a fatty acid + H(+). It carries out the reaction a diacylglycerol + H2O = a monoacylglycerol + a fatty acid + H(+). In terms of biological role, secreted mono- and diacylglycerol lipase involved in plant virulence. Has a substrate preference for p-nitrophenyl esters with a carbon chain length of C10 (p-nitrophenyl caprate). The chain is Secreted mono- and diacylglycerol lipase 2 from Gibberella zeae (strain ATCC MYA-4620 / CBS 123657 / FGSC 9075 / NRRL 31084 / PH-1) (Wheat head blight fungus).